The following is an 842-amino-acid chain: MSRWLSLLLFAVQAVGGYEAGEELSCKRRHGGIPLPLGVFTVQKEGFPDALPAIRTALSHVHSRSCILQGYRLEMIVKDTHCKTSQGMKALFDLIASRPRPVAILGGQCTEVNEPIAMALKYWQIVQLSYAETHAKFASSDSHELFTTFFRVVPGSRNTNMAKCKFVNHFGWKRVGTVKQNDQPRYALPHEALTTRLEHGFGVKIVHTAGVNWEQIETVGGELDELKERDVRIILVDVDEEMAATVLCAGYHRGMYGDNYVWILPGYHSDKWLNQTHDNCTVEEMREAAKNHFSVEFALTRRDVDTKIVGNTRAGDVWNEITQLDPNNTWRGYLYDGLWTLAIALSHSMGDNAEFSHHKMMEAIDNSSFQGLTGKVKFANNERLGLVDIKQWSDGQYVPFAVYDGADDEFKIIDSTTKGWSPPLDSTITERRREHISSILFLAMSLLALIGIFLALIFLLINFRYRNHRFIKMSSPNLNNIIIAGSICTFASVIMLGLDTRIVSPDVFVWLCYTKTWTLCIGFTLSFGAMFSKTWRVHSIFTNIRMDRKAIKDSKLFIILGILLFIDICVLVTWAFVSPFSYTVTELPHIPEDNIVIIPEVEKCNSSHSGVFQAVLYAVKGVLMILGCFLAWETRHVNVPALNDSKYIGTSVYCCVVMSVLGLSTSVILQERVNEMFSLASFFVIFSTTLTLCLVFVPKVIELARNPVGNEPRAYRRGLMKSVVAKTSQPMSPQPRSDSSGDLIGKAESENKLRRRYLHQKSTQLWDLVEKLRAQGDTRFLQQEWCLSSASPSSQERETSLLLRQPSSSNNREETSLTAAGPNGERSSDWPWVDPDEPSTKL.

The first 17 residues, 1 to 17, serve as a signal peptide directing secretion; the sequence is MSRWLSLLLFAVQAVGG. At 18-438 the chain is on the extracellular side; that stretch reads YEAGEELSCK…TERRREHISS (421 aa). Residues Asn-274, Asn-279, Asn-327, and Asn-366 are each glycosylated (N-linked (GlcNAc...) asparagine). The chain crosses the membrane as a helical span at residues 439 to 459; that stretch reads ILFLAMSLLALIGIFLALIFL. Residues 460-477 are Cytoplasmic-facing; it reads LINFRYRNHRFIKMSSPN. Residues 478–498 form a helical membrane-spanning segment; it reads LNNIIIAGSICTFASVIMLGL. Over 499–506 the chain is Extracellular; that stretch reads DTRIVSPD. The helical transmembrane segment at 507-527 threads the bilayer; sequence VFVWLCYTKTWTLCIGFTLSF. Over 528–556 the chain is Cytoplasmic; the sequence is GAMFSKTWRVHSIFTNIRMDRKAIKDSKL. The chain crosses the membrane as a helical span at residues 557–577; the sequence is FIILGILLFIDICVLVTWAFV. At 578-610 the chain is on the extracellular side; sequence SPFSYTVTELPHIPEDNIVIIPEVEKCNSSHSG. The N-linked (GlcNAc...) asparagine glycan is linked to Asn-605. Residues 611-631 traverse the membrane as a helical segment; sequence VFQAVLYAVKGVLMILGCFLA. Residues 632 to 647 are Cytoplasmic-facing; sequence WETRHVNVPALNDSKY. Residues 648–668 form a helical membrane-spanning segment; that stretch reads IGTSVYCCVVMSVLGLSTSVI. The Extracellular segment spans residues 669 to 676; that stretch reads LQERVNEM. A helical membrane pass occupies residues 677–697; the sequence is FSLASFFVIFSTTLTLCLVFV. The Cytoplasmic portion of the chain corresponds to 698-842; sequence PKVIELARNP…VDPDEPSTKL (145 aa). Over residues 725 to 740 the composition is skewed to polar residues; it reads AKTSQPMSPQPRSDSS. 2 disordered regions span residues 725-744 and 791-842; these read AKTS…GDLI and SPSS…STKL.

The protein belongs to the G-protein coupled receptor 3 family. May form a heterodimer with gbb-1. As to expression, expressed in cholinergic motor neurons.

The protein resides in the cell membrane. Functionally, component of a heterodimeric G-protein coupled receptor for GABA, formed by gbb-1 and gbb-2. Within the heterodimeric GABA receptor, only gbb-1 seems to bind agonists, while gbb-2 mediates coupling to G proteins. Ligand binding causes a conformation change that triggers signaling via guanine nucleotide-binding proteins (G proteins) and modulates the activity of down-stream effectors, such as adenylate cyclase. Signaling inhibits adenylate cyclase, stimulates phospholipase A2, activates potassium channels, inactivates voltage-dependent calcium-channels and modulates inositol phospholipid hydrolysis. Plays a critical role in the fine-tuning of inhibitory synaptic transmission. Pre-synaptic GABA receptor inhibits neurotransmitter release by down-regulating high-voltage activated calcium channels, whereas postsynaptic GABA receptor decreases neuronal excitability by activating a prominent inwardly rectifying potassium (Kir) conductance that underlies the late inhibitory postsynaptic potentials. Along with gbb-1, may couple to the G(o)-alpha G-protein goa-1 to negatively regulate cholinergic receptor activity in the presence of high levels of acetylcholine in ventral cord motor neurons. As acetylcholine depolarizes body wall muscles, modulation of acetylcholine levels most likely results in the control of locomotory behavior. Regulates locomotory behavior in response to GABA release by GABAergic motor neurons. The polypeptide is Gamma-aminobutyric acid type B receptor subunit 2 (Caenorhabditis elegans).